Reading from the N-terminus, the 284-residue chain is Bifunctional protein FolD (284 aa).

NADP(+) is bound by residues 164 to 166 and Ser-189; that span reads GRS.

This sequence belongs to the tetrahydrofolate dehydrogenase/cyclohydrolase family. As to quaternary structure, homodimer.

It carries out the reaction (6R)-5,10-methylene-5,6,7,8-tetrahydrofolate + NADP(+) = (6R)-5,10-methenyltetrahydrofolate + NADPH. It catalyses the reaction (6R)-5,10-methenyltetrahydrofolate + H2O = (6R)-10-formyltetrahydrofolate + H(+). It functions in the pathway one-carbon metabolism; tetrahydrofolate interconversion. Functionally, catalyzes the oxidation of 5,10-methylenetetrahydrofolate to 5,10-methenyltetrahydrofolate and then the hydrolysis of 5,10-methenyltetrahydrofolate to 10-formyltetrahydrofolate. This is Bifunctional protein FolD from Listeria welshimeri serovar 6b (strain ATCC 35897 / DSM 20650 / CCUG 15529 / CIP 8149 / NCTC 11857 / SLCC 5334 / V8).